A 157-amino-acid chain; its full sequence is UPF0251 protein CLJ_B1488 (157 aa).

The protein belongs to the UPF0251 family.

The protein is UPF0251 protein CLJ_B1488 of Clostridium botulinum (strain 657 / Type Ba4).